Consider the following 194-residue polypeptide: HTH-type transcriptional regulator BetI (194 aa).

An HTH tetR-type domain is found at Glu8 to Leu68. The H-T-H motif DNA-binding region spans Thr31–Phe50.

It functions in the pathway amine and polyamine biosynthesis; betaine biosynthesis via choline pathway [regulation]. Repressor involved in the biosynthesis of the osmoprotectant glycine betaine. It represses transcription of the choline transporter BetT and the genes of BetAB involved in the synthesis of glycine betaine. This chain is HTH-type transcriptional regulator BetI, found in Burkholderia ambifaria (strain MC40-6).